Here is a 316-residue protein sequence, read N- to C-terminus: Sideroflexin-4 (316 aa).

Transmembrane regions (helical) follow at residues 83–103 (QVFL…HKGI), 141–161 (LLIL…QIIL), 174–194 (ICRS…NILV), 230–250 (ISRA…MALL), and 263–283 (IAPI…PVSF).

Belongs to the sideroflexin family.

It localises to the mitochondrion inner membrane. In terms of biological role, mitochondrial amino-acid transporter. Does not act as a serine transporter: not able to mediate transport of serine into mitochondria. The protein is Sideroflexin-4 of Danio rerio (Zebrafish).